The chain runs to 98 residues: MANIQFRPLHDRVVVRRVESENKTAGGIIIPDTAKEKPQEGEIIAVGNGALDDNGKRVPLEVKTGDRILFGKWSGTEVKINGEDLLIMKESDIMGILG.

The protein belongs to the GroES chaperonin family. Heptamer of 7 subunits arranged in a ring. Interacts with the chaperonin GroEL.

Its subcellular location is the cytoplasm. Functionally, together with the chaperonin GroEL, plays an essential role in assisting protein folding. The GroEL-GroES system forms a nano-cage that allows encapsulation of the non-native substrate proteins and provides a physical environment optimized to promote and accelerate protein folding. GroES binds to the apical surface of the GroEL ring, thereby capping the opening of the GroEL channel. This Bartonella quintana (strain Toulouse) (Rochalimaea quintana) protein is Co-chaperonin GroES.